Here is a 203-residue protein sequence, read N- to C-terminus: Ribosomal RNA small subunit methyltransferase G (203 aa).

S-adenosyl-L-methionine-binding positions include G73, L78, 124-125 (VE), and R139.

The protein belongs to the methyltransferase superfamily. RNA methyltransferase RsmG family.

The protein localises to the cytoplasm. The enzyme catalyses guanosine(527) in 16S rRNA + S-adenosyl-L-methionine = N(7)-methylguanosine(527) in 16S rRNA + S-adenosyl-L-homocysteine. In terms of biological role, specifically methylates the N7 position of guanine in position 527 of 16S rRNA. This Haemophilus influenzae (strain PittEE) protein is Ribosomal RNA small subunit methyltransferase G.